We begin with the raw amino-acid sequence, 288 residues long: ATP synthase gamma chain (288 aa).

The protein belongs to the ATPase gamma chain family. As to quaternary structure, F-type ATPases have 2 components, CF(1) - the catalytic core - and CF(0) - the membrane proton channel. CF(1) has five subunits: alpha(3), beta(3), gamma(1), delta(1), epsilon(1). CF(0) has three main subunits: a, b and c.

The protein localises to the cell inner membrane. Produces ATP from ADP in the presence of a proton gradient across the membrane. The gamma chain is believed to be important in regulating ATPase activity and the flow of protons through the CF(0) complex. The chain is ATP synthase gamma chain from Rickettsia canadensis (strain McKiel).